Here is a 270-residue protein sequence, read N- to C-terminus: Carboxy-S-adenosyl-L-methionine synthase (270 aa).

S-adenosyl-L-methionine contacts are provided by residues tyrosine 65, glycine 90–serine 92, aspartate 143–isoleucine 144, asparagine 158, and arginine 225.

Belongs to the class I-like SAM-binding methyltransferase superfamily. Cx-SAM synthase family. Homodimer.

The catalysed reaction is prephenate + S-adenosyl-L-methionine = carboxy-S-adenosyl-L-methionine + 3-phenylpyruvate + H2O. Functionally, catalyzes the conversion of S-adenosyl-L-methionine (SAM) to carboxy-S-adenosyl-L-methionine (Cx-SAM). This Chromohalobacter salexigens (strain ATCC BAA-138 / DSM 3043 / CIP 106854 / NCIMB 13768 / 1H11) protein is Carboxy-S-adenosyl-L-methionine synthase.